Consider the following 859-residue polypeptide: DNA mismatch repair protein MutS (859 aa).

617–624 (GPNMGGKS) is an ATP binding site. Residues 799–821 (ETTSLPHEQPRAKPGKPAVPQQS) are disordered.

Belongs to the DNA mismatch repair MutS family.

Functionally, this protein is involved in the repair of mismatches in DNA. It is possible that it carries out the mismatch recognition step. This protein has a weak ATPase activity. The sequence is that of DNA mismatch repair protein MutS from Pseudomonas savastanoi pv. phaseolicola (strain 1448A / Race 6) (Pseudomonas syringae pv. phaseolicola (strain 1448A / Race 6)).